We begin with the raw amino-acid sequence, 270 residues long: Glutamate racemase (270 aa).

Residues 14 to 15 (DS) and 46 to 47 (YG) each bind substrate. Cysteine 77 functions as the Proton donor/acceptor in the catalytic mechanism. A substrate-binding site is contributed by 78-79 (NT). Catalysis depends on cysteine 189, which acts as the Proton donor/acceptor. 190–191 (TH) provides a ligand contact to substrate.

The protein belongs to the aspartate/glutamate racemases family.

The enzyme catalyses L-glutamate = D-glutamate. It functions in the pathway cell wall biogenesis; peptidoglycan biosynthesis. Its function is as follows. Provides the (R)-glutamate required for cell wall biosynthesis. This Neisseria meningitidis serogroup C protein is Glutamate racemase.